The following is a 391-amino-acid chain: Inhibin beta B chain (391 aa).

The N-terminal stretch at 1 to 25 is a signal peptide; the sequence is MDGAARRGVLAALLACGLLLLGAAA. The propeptide occupies 26–276; that stretch reads TPTPPPAGSS…ADNKHRIRKR (251 aa). Residues 27–47 are disordered; the sequence is PTPPPAGSSPQDTCTSCGFRR. Asparagine 77 carries an N-linked (GlcNAc...) asparagine glycan. 4 disulfides stabilise this stretch: cysteine 280–cysteine 288, cysteine 287–cysteine 356, cysteine 316–cysteine 388, and cysteine 320–cysteine 390.

The protein belongs to the TGF-beta family. Dimeric, linked by one or more disulfide bonds. Inhibin A is a dimer of alpha and beta-A. Inhibin B is a dimer of alpha and beta-B. Activin A is a homodimer of beta-A. Activin B is a homodimer of beta-B. Activin AB is a dimer of beta-A and beta-B.

It localises to the secreted. Inhibins and activins inhibit and activate, respectively, the secretion of follitropin by the pituitary gland. Inhibins/activins are involved in regulating a number of diverse functions such as hypothalamic and pituitary hormone secretion, gonadal hormone secretion, germ cell development and maturation, erythroid differentiation, insulin secretion, nerve cell survival, embryonic axial development or bone growth, depending on their subunit composition. Inhibins appear to oppose the functions of activins. The sequence is that of Inhibin beta B chain (INHBB) from Gallus gallus (Chicken).